The primary structure comprises 222 residues: 26S proteasome non-ATPase regulatory subunit 9 (222 aa).

One can recognise a PDZ domain in the interval 108-194 (QARDMAEARE…KPLNVTVIRR (87 aa)). Phosphoserine is present on S128.

The protein belongs to the proteasome subunit p27 family. As to quaternary structure, interacts with PSMC3. Part of a transient complex (modulator) containing PSMD9, PSMC6 and PSMC3 formed during the assembly of the 26S proteasome.

Its function is as follows. Acts as a chaperone during the assembly of the 26S proteasome, specifically of the base subcomplex of the PA700/19S regulatory complex (RC). During the base subcomplex assembly is part of an intermediate PSMD9:PSMC6:PSMC3 module, also known as modulator trimer complex; PSMD9 is released during the further base assembly process. This Mus musculus (Mouse) protein is 26S proteasome non-ATPase regulatory subunit 9 (Psmd9).